A 230-amino-acid polypeptide reads, in one-letter code: 2,3-bisphosphoglycerate-dependent phosphoglycerate mutase (230 aa).

Substrate-binding positions include 8–15 (RHGESEWN), 21–22 (TG), R60, 87–90 (ERHY), K98, 114–115 (RR), and 183–184 (GN). Catalysis depends on H9, which acts as the Tele-phosphohistidine intermediate. E87 acts as the Proton donor/acceptor in catalysis.

The protein belongs to the phosphoglycerate mutase family. BPG-dependent PGAM subfamily.

The enzyme catalyses (2R)-2-phosphoglycerate = (2R)-3-phosphoglycerate. Its pathway is carbohydrate degradation; glycolysis; pyruvate from D-glyceraldehyde 3-phosphate: step 3/5. Catalyzes the interconversion of 2-phosphoglycerate and 3-phosphoglycerate. The sequence is that of 2,3-bisphosphoglycerate-dependent phosphoglycerate mutase from Streptococcus gordonii (strain Challis / ATCC 35105 / BCRC 15272 / CH1 / DL1 / V288).